The chain runs to 139 residues: ATP synthase epsilon chain (139 aa).

It belongs to the ATPase epsilon chain family. F-type ATPases have 2 components, CF(1) - the catalytic core - and CF(0) - the membrane proton channel. CF(1) has five subunits: alpha(3), beta(3), gamma(1), delta(1), epsilon(1). CF(0) has three main subunits: a, b and c.

It localises to the cell membrane. Its function is as follows. Produces ATP from ADP in the presence of a proton gradient across the membrane. This is ATP synthase epsilon chain from Streptococcus sanguinis.